The following is a 320-amino-acid chain: Cytochrome f (320 aa).

The signal sequence occupies residues Met-1 to Ala-35. Heme-binding residues include Tyr-36, Cys-56, Cys-59, and His-60. Residues Val-286–Lys-306 form a helical membrane-spanning segment.

The protein belongs to the cytochrome f family. The 4 large subunits of the cytochrome b6-f complex are cytochrome b6, subunit IV (17 kDa polypeptide, petD), cytochrome f and the Rieske protein, while the 4 small subunits are PetG, PetL, PetM and PetN. The complex functions as a dimer. Requires heme as cofactor.

The protein localises to the plastid. It is found in the chloroplast thylakoid membrane. In terms of biological role, component of the cytochrome b6-f complex, which mediates electron transfer between photosystem II (PSII) and photosystem I (PSI), cyclic electron flow around PSI, and state transitions. This is Cytochrome f from Liriodendron tulipifera (Tuliptree).